A 237-amino-acid polypeptide reads, in one-letter code: Phosphoribosylaminoimidazole-succinocarboxamide synthase (237 aa).

The protein belongs to the SAICAR synthetase family.

It catalyses the reaction 5-amino-1-(5-phospho-D-ribosyl)imidazole-4-carboxylate + L-aspartate + ATP = (2S)-2-[5-amino-1-(5-phospho-beta-D-ribosyl)imidazole-4-carboxamido]succinate + ADP + phosphate + 2 H(+). Its pathway is purine metabolism; IMP biosynthesis via de novo pathway; 5-amino-1-(5-phospho-D-ribosyl)imidazole-4-carboxamide from 5-amino-1-(5-phospho-D-ribosyl)imidazole-4-carboxylate: step 1/2. This Enterobacter sp. (strain 638) protein is Phosphoribosylaminoimidazole-succinocarboxamide synthase.